Here is a 343-residue protein sequence, read N- to C-terminus: F17b-G fimbrial adhesin (343 aa).

Residues 1-22 (MTNFYKVFLAVFILVCCNISHA) form the signal peptide. The interval 23–199 (VVSFIGSTEN…LNPFTLNDTV (177 aa)) is receptor-binding lectin domain. Residues 65–66 (AN), 110–111 (DT), and 138–141 (STQG) contribute to the a carbohydrate site. A disulfide bridge connects residues Cys75 and Cys132. The interval 200–343 (TSCRLLTPSA…GISTFTFSYQ (144 aa)) is fimbrillin-binding domain. Residues 287–307 (LKFGPDSPVKGNENQWQLSTG) form a disordered region. The segment covering 298–307 (NENQWQLSTG) has biased composition (polar residues).

It belongs to the fimbrial protein family.

It is found in the fimbrium. Essential fimbrial adhesion factor that mediates binding to N-acetylglucosamine-containing receptors in the host intestinal microvilli, leading to colonization of the intestinal tissue, and diarrhea or septicemia. Also confers adhesiveness to laminin and basement membranes. In Escherichia coli, this protein is F17b-G fimbrial adhesin (f17bG).